A 431-amino-acid chain; its full sequence is Glutamate-1-semialdehyde 2,1-aminomutase (431 aa).

K269 is subject to N6-(pyridoxal phosphate)lysine.

It belongs to the class-III pyridoxal-phosphate-dependent aminotransferase family. HemL subfamily. In terms of assembly, homodimer. Requires pyridoxal 5'-phosphate as cofactor.

The protein localises to the cytoplasm. The catalysed reaction is (S)-4-amino-5-oxopentanoate = 5-aminolevulinate. It participates in porphyrin-containing compound metabolism; protoporphyrin-IX biosynthesis; 5-aminolevulinate from L-glutamyl-tRNA(Glu): step 2/2. It functions in the pathway porphyrin-containing compound metabolism; chlorophyll biosynthesis. The chain is Glutamate-1-semialdehyde 2,1-aminomutase from Chlorobaculum parvum (strain DSM 263 / NCIMB 8327) (Chlorobium vibrioforme subsp. thiosulfatophilum).